Consider the following 395-residue polypeptide: Nicotinate phosphoribosyltransferase (395 aa).

At histidine 222 the chain carries Phosphohistidine; by autocatalysis.

It belongs to the NAPRTase family. In terms of processing, transiently phosphorylated on a His residue during the reaction cycle. Phosphorylation strongly increases the affinity for substrates and increases the rate of nicotinate D-ribonucleotide production. Dephosphorylation regenerates the low-affinity form of the enzyme, leading to product release.

The catalysed reaction is nicotinate + 5-phospho-alpha-D-ribose 1-diphosphate + ATP + H2O = nicotinate beta-D-ribonucleotide + ADP + phosphate + diphosphate. The protein operates within cofactor biosynthesis; NAD(+) biosynthesis; nicotinate D-ribonucleotide from nicotinate: step 1/1. In terms of biological role, catalyzes the synthesis of beta-nicotinate D-ribonucleotide from nicotinate and 5-phospho-D-ribose 1-phosphate at the expense of ATP. This Polaromonas sp. (strain JS666 / ATCC BAA-500) protein is Nicotinate phosphoribosyltransferase.